A 257-amino-acid polypeptide reads, in one-letter code: Acetylglutamate kinase (257 aa).

Substrate-binding positions include 43-44 (GG), Arg-65, and Asn-157. Residues 180 to 185 (DVSGIL) and 208 to 210 (IIT) contribute to the ATP site.

Belongs to the acetylglutamate kinase family. ArgB subfamily. Homodimer.

The protein resides in the cytoplasm. It catalyses the reaction N-acetyl-L-glutamate + ATP = N-acetyl-L-glutamyl 5-phosphate + ADP. Its pathway is amino-acid biosynthesis; L-arginine biosynthesis; N(2)-acetyl-L-ornithine from L-glutamate: step 2/4. Functionally, catalyzes the ATP-dependent phosphorylation of N-acetyl-L-glutamate. The polypeptide is Acetylglutamate kinase (Salmonella paratyphi A (strain AKU_12601)).